The sequence spans 635 residues: Threonine--tRNA ligase (635 aa).

An editing domain region spans residues 1–144 (MQLLLIHSDY…RSIRPEGTQR (144 aa)). Residues 215-514 (PHVELMRRLE…TEEGKVPMLP (300 aa)) form a catalytic region. 3 residues coordinate Zn(2+): cysteine 307, histidine 359, and histidine 483.

The protein belongs to the class-II aminoacyl-tRNA synthetase family. Homodimer. Zn(2+) serves as cofactor.

It is found in the cytoplasm. The catalysed reaction is tRNA(Thr) + L-threonine + ATP = L-threonyl-tRNA(Thr) + AMP + diphosphate + H(+). In terms of biological role, catalyzes the attachment of threonine to tRNA(Thr) in a two-step reaction: L-threonine is first activated by ATP to form Thr-AMP and then transferred to the acceptor end of tRNA(Thr). Also edits incorrectly charged L-seryl-tRNA(Thr). The polypeptide is Threonine--tRNA ligase (Methanosarcina barkeri (strain Fusaro / DSM 804)).